Here is a 231-residue protein sequence, read N- to C-terminus: uncharacterized protein (231 aa).

The N-terminal stretch at 1 to 17 is a signal peptide; sequence MFGKILTTSLLIAMTFA. The segment at 197 to 231 is disordered; the sequence is KARKQQKNEGDDEETEDEQKIGSAIDGWVERQAKL.

This is an uncharacterized protein from Caenorhabditis elegans.